Consider the following 487-residue polypeptide: DNA ligase (487 aa).

The active-site N6-AMP-lysine intermediate is the Lys159. Residues Arg164, Arg182, and Glu217 each contribute to the ATP site. Glu217 provides a ligand contact to a divalent metal cation. Positions 229–237 are interaction with the sliding clamp; sequence EGLDFLFDA. Glu344 contributes to the a divalent metal cation binding site. The ATP site is built by Arg359 and Lys365.

This sequence belongs to the ATP-dependent DNA ligase family. Interacts with the sliding clamp. A divalent metal cation serves as cofactor.

It catalyses the reaction ATP + (deoxyribonucleotide)n-3'-hydroxyl + 5'-phospho-(deoxyribonucleotide)m = (deoxyribonucleotide)n+m + AMP + diphosphate.. Functionally, DNA ligase, which is expressed in the early stage of lytic development, has been implicated in T4 DNA synthesis and genetic recombination. It may also play a role in T4 DNA repair. The polypeptide is DNA ligase (30) (Escherichia coli (Bacteriophage T6)).